Here is a 112-residue protein sequence, read N- to C-terminus: MAM and fibronectin type III domain-containing protein 2 (112 aa).

As to expression, component of the acid-insoluble and acid-soluble organic matrix of the aragonitic skeleton (at protein level).

It is found in the secreted. This chain is MAM and fibronectin type III domain-containing protein 2, found in Acropora millepora (Staghorn coral).